The sequence spans 99 residues: NADH-quinone oxidoreductase subunit K (99 aa).

3 consecutive transmembrane segments (helical) span residues 3 to 23 (PENY…GVLI), 28 to 48 (IIVF…FVTF), and 59 to 79 (VFAF…LAII).

It belongs to the complex I subunit 4L family. As to quaternary structure, NDH-1 is composed of 14 different subunits. Subunits NuoA, H, J, K, L, M, N constitute the membrane sector of the complex.

It is found in the cell membrane. It catalyses the reaction a quinone + NADH + 5 H(+)(in) = a quinol + NAD(+) + 4 H(+)(out). In terms of biological role, NDH-1 shuttles electrons from NADH, via FMN and iron-sulfur (Fe-S) centers, to quinones in the respiratory chain. The immediate electron acceptor for the enzyme in this species is believed to be a menaquinone. Couples the redox reaction to proton translocation (for every two electrons transferred, four hydrogen ions are translocated across the cytoplasmic membrane), and thus conserves the redox energy in a proton gradient. In Rhodococcus jostii (strain RHA1), this protein is NADH-quinone oxidoreductase subunit K.